Reading from the N-terminus, the 153-residue chain is Deoxyuridine 5'-triphosphate nucleotidohydrolase (153 aa).

Substrate contacts are provided by residues 65–67 (RSG), Asn-78, and 82–84 (TID). The disordered stretch occupies residues 132 to 153 (MTQRGEGGFGHTGISAVHPRTH).

This sequence belongs to the dUTPase family. Mg(2+) serves as cofactor.

It catalyses the reaction dUTP + H2O = dUMP + diphosphate + H(+). The protein operates within pyrimidine metabolism; dUMP biosynthesis; dUMP from dCTP (dUTP route): step 2/2. This enzyme is involved in nucleotide metabolism: it produces dUMP, the immediate precursor of thymidine nucleotides and it decreases the intracellular concentration of dUTP so that uracil cannot be incorporated into DNA. In Chlorobium limicola (strain DSM 245 / NBRC 103803 / 6330), this protein is Deoxyuridine 5'-triphosphate nucleotidohydrolase.